Reading from the N-terminus, the 31-residue chain is Potassium channel toxin alpha-KTx 5.1 (31 aa).

3 disulfides stabilise this stretch: cysteine 3/cysteine 21, cysteine 8/cysteine 26, and cysteine 12/cysteine 28. A [R/K]XCQ motif region spans residues 6–9; sequence RMCQ. The residue at position 31 (histidine 31) is a Histidine amide.

The protein belongs to the short scorpion toxin superfamily. Potassium channel inhibitor family. Alpha-KTx 05 subfamily. In terms of processing, two disulfide bonds are the minimal requirement needed to produce a nativelike and bio-active conformation in this toxin. The third disulfide provides an additional contribution to structure stabilization and can modulate biological potency depending on its position and the structural regions involved in biological activity. Expressed by the venom gland.

The protein resides in the secreted. Blocker for the small conductance calcium-activated potassium channels. Shows the best affinity for KCa2.2/KCNN2 (Kd=0.2 nM), followed by KCa2.3/KCNN3 (Kd=1.1 nM) and KCa2.1/KCNN1 (Kd=325 nM). This chain is Potassium channel toxin alpha-KTx 5.1, found in Leiurus hebraeus (Hebrew deathstalker scorpion).